The following is a 605-amino-acid chain: Dolichyl-diphosphooligosaccharide--protein glycosyltransferase subunit 1 (605 aa).

Residues 1-22 (MEAPIVLLLLLWLALAPTPGSA) form the signal peptide. At 23–437 (SSEAPPLVNE…FNKVLMLQEP (415 aa)) the chain is on the lumenal side. Lysine 185 is modified (N6-acetyllysine). Asparagine 297 carries an N-linked (GlcNAc...) asparagine glycan. A helical transmembrane segment spans residues 438 to 455 (LLVVAAFYILFFTVIIYV). The Cytoplasmic segment spans residues 456–605 (RLDFSITKDP…TKIDHILDAL (150 aa)). An N6-acetyllysine; alternate modification is found at lysine 536. Lysine 536 is covalently cross-linked (Glycyl lysine isopeptide (Lys-Gly) (interchain with G-Cter in SUMO2); alternate).

Belongs to the OST1 family. As to quaternary structure, component of the oligosaccharyltransferase (OST) complex. OST exists in two different complex forms which contain common core subunits RPN1, RPN2, OST48, OST4, DAD1 and TMEM258, either STT3A or STT3B as catalytic subunits, and form-specific accessory subunits. STT3A complex assembly occurs through the formation of 3 subcomplexes. Subcomplex 1 contains RPN1 and TMEM258, subcomplex 2 contains the STT3A-specific subunits STT3A, DC2/OSTC, and KCP2 as well as the core subunit OST4, and subcomplex 3 contains RPN2, DAD1, and OST48. The STT3A complex can form stable complexes with the Sec61 complex or with both the Sec61 and TRAP complexes. Interacts with TMEM35A/NACHO. In terms of processing, ubiquitinated by the ECS(ASB11) complex. Ufmylated by UFL1 in response to endoplasmic reticulum stress, promoting reticulophagy of endoplasmic reticulum sheets. As to expression, expressed in all tissues tested.

Its subcellular location is the endoplasmic reticulum membrane. It participates in protein modification; protein glycosylation. In terms of biological role, subunit of the oligosaccharyl transferase (OST) complex that catalyzes the initial transfer of a defined glycan (Glc(3)Man(9)GlcNAc(2) in eukaryotes) from the lipid carrier dolichol-pyrophosphate to an asparagine residue within an Asn-X-Ser/Thr consensus motif in nascent polypeptide chains, the first step in protein N-glycosylation. N-glycosylation occurs cotranslationally and the complex associates with the Sec61 complex at the channel-forming translocon complex that mediates protein translocation across the endoplasmic reticulum (ER). All subunits are required for a maximal enzyme activity. The polypeptide is Dolichyl-diphosphooligosaccharide--protein glycosyltransferase subunit 1 (Rattus norvegicus (Rat)).